The primary structure comprises 361 residues: Phosphoserine aminotransferase (361 aa).

Arg42 is an L-glutamate binding site. Pyridoxal 5'-phosphate is bound by residues 76-77 (AT), Trp102, Thr152, Asp172, and Gln195. Position 196 is an N6-(pyridoxal phosphate)lysine (Lys196). 237–238 (NT) is a pyridoxal 5'-phosphate binding site.

This sequence belongs to the class-V pyridoxal-phosphate-dependent aminotransferase family. SerC subfamily. As to quaternary structure, homodimer. Requires pyridoxal 5'-phosphate as cofactor.

It is found in the cytoplasm. It carries out the reaction O-phospho-L-serine + 2-oxoglutarate = 3-phosphooxypyruvate + L-glutamate. The catalysed reaction is 4-(phosphooxy)-L-threonine + 2-oxoglutarate = (R)-3-hydroxy-2-oxo-4-phosphooxybutanoate + L-glutamate. The protein operates within amino-acid biosynthesis; L-serine biosynthesis; L-serine from 3-phospho-D-glycerate: step 2/3. It participates in cofactor biosynthesis; pyridoxine 5'-phosphate biosynthesis; pyridoxine 5'-phosphate from D-erythrose 4-phosphate: step 3/5. In terms of biological role, catalyzes the reversible conversion of 3-phosphohydroxypyruvate to phosphoserine and of 3-hydroxy-2-oxo-4-phosphonooxybutanoate to phosphohydroxythreonine. The chain is Phosphoserine aminotransferase from Xanthomonas campestris pv. campestris (strain B100).